A 361-amino-acid polypeptide reads, in one-letter code: Phospho-N-acetylmuramoyl-pentapeptide-transferase (361 aa).

Transmembrane regions (helical) follow at residues 27 to 47 (GALF…ISLL), 72 to 92 (TPTM…LLWA), 99 to 119 (VWIT…DDYL), 139 to 159 (ALIA…GLAY), 169 to 189 (AIVN…VGAG), 200 to 220 (GLAI…AYLV), 240 to 260 (LAVV…FNAP), 264 to 284 (IFMG…VAVA), 289 to 309 (IVLA…IIQV), and 338 to 358 (QVVI…LATL).

The protein belongs to the glycosyltransferase 4 family. MraY subfamily. It depends on Mg(2+) as a cofactor.

It is found in the cell inner membrane. It carries out the reaction UDP-N-acetyl-alpha-D-muramoyl-L-alanyl-gamma-D-glutamyl-meso-2,6-diaminopimeloyl-D-alanyl-D-alanine + di-trans,octa-cis-undecaprenyl phosphate = di-trans,octa-cis-undecaprenyl diphospho-N-acetyl-alpha-D-muramoyl-L-alanyl-D-glutamyl-meso-2,6-diaminopimeloyl-D-alanyl-D-alanine + UMP. It participates in cell wall biogenesis; peptidoglycan biosynthesis. Functionally, catalyzes the initial step of the lipid cycle reactions in the biosynthesis of the cell wall peptidoglycan: transfers peptidoglycan precursor phospho-MurNAc-pentapeptide from UDP-MurNAc-pentapeptide onto the lipid carrier undecaprenyl phosphate, yielding undecaprenyl-pyrophosphoryl-MurNAc-pentapeptide, known as lipid I. In Methylobacterium nodulans (strain LMG 21967 / CNCM I-2342 / ORS 2060), this protein is Phospho-N-acetylmuramoyl-pentapeptide-transferase.